We begin with the raw amino-acid sequence, 1097 residues long: DNA-directed RNA polymerase subunit beta (1097 aa).

Positions 1072 to 1097 (QDVNPRRSTPSRPTYESLGVADYDED) are disordered.

The protein belongs to the RNA polymerase beta chain family. As to quaternary structure, in cyanobacteria the RNAP catalytic core is composed of 2 alpha, 1 beta, 1 beta', 1 gamma and 1 omega subunit. When a sigma factor is associated with the core the holoenzyme is formed, which can initiate transcription.

It carries out the reaction RNA(n) + a ribonucleoside 5'-triphosphate = RNA(n+1) + diphosphate. Its function is as follows. DNA-dependent RNA polymerase catalyzes the transcription of DNA into RNA using the four ribonucleoside triphosphates as substrates. The chain is DNA-directed RNA polymerase subunit beta from Prochlorococcus marinus (strain MIT 9303).